The following is a 332-amino-acid chain: 30 kDa heat shock protein (332 aa).

Residues 1-34 (MNDTLSSFLNRNEALGLNPPHGLDMHITKRGSDW) lie on the Extracellular side of the membrane. The helical transmembrane segment at 35–55 (LWAVFAVFGFILLCYVVMFFI) threads the bilayer. Residues 56–65 (AENKGSRLTR) are Cytoplasmic-facing. Residues 66 to 86 (YALAPAFLITFFEFFAFFTYA) traverse the membrane as a helical segment. Residues 87–121 (SDLGWTGVQAEFNHVKVSKSITGEVPGIRQIFYSK) lie on the Extracellular side of the membrane. Residues 122–142 (YIAWFLSWPCLLFLIELAAST) form a helical membrane-spanning segment. Topologically, residues 143 to 157 (TGENDDISALDMVHS) are cytoplasmic. Residues 158–178 (LLIQIVGTLFWVVSLLVGSLI) form a helical membrane-spanning segment. Residues 179–181 (KST) lie on the Extracellular side of the membrane. Residues 182-202 (YKWGYYTIGAVAMLVTQGVIC) traverse the membrane as a helical segment. Residues 203-215 (QRQFFNLKTRGFN) lie on the Cytoplasmic side of the membrane. The chain crosses the membrane as a helical span at residues 216-236 (ALMLCTCMVIVWLYFICWGLS). The Extracellular segment spans residues 237–248 (DGGNRIQPDGEA). A helical transmembrane segment spans residues 249–269 (IFYGVLDLCVFAIYPCYLLIA). Residues 270-332 (VSRDGKLPRL…EAEQAVEDTA (63 aa)) are Cytoplasmic-facing. The interval 290–332 (ATDDVEDAAPETKEAVPESPRASGETAIHEPEPEAEQAVEDTA) is disordered. At S308 the chain carries Phosphoserine. A compositionally biased stretch (acidic residues) spans 322–332 (PEAEQAVEDTA). T331 is modified (phosphothreonine).

Belongs to the archaeal/bacterial/fungal opsin family.

It localises to the membrane. In terms of biological role, probably cooperates with other heat shock proteins in the translocation of polypeptides through membranes. It may counteract the altering effect of heat shock on the plasma membrane. This Saccharomyces cerevisiae (strain ATCC 204508 / S288c) (Baker's yeast) protein is 30 kDa heat shock protein (HSP30).